The chain runs to 638 residues: Threonine--tRNA ligase (638 aa).

Positions 1–61 (MPNITLPDGS…EADTPLAIVT (61 aa)) constitute a TGS domain. The catalytic stretch occupies residues 242-533 (DHRKLGRLLD…LIEHYAGALP (292 aa)). Cys-333, His-384, and His-510 together coordinate Zn(2+).

Belongs to the class-II aminoacyl-tRNA synthetase family. In terms of assembly, homodimer. Requires Zn(2+) as cofactor.

It is found in the cytoplasm. It carries out the reaction tRNA(Thr) + L-threonine + ATP = L-threonyl-tRNA(Thr) + AMP + diphosphate + H(+). Its function is as follows. Catalyzes the attachment of threonine to tRNA(Thr) in a two-step reaction: L-threonine is first activated by ATP to form Thr-AMP and then transferred to the acceptor end of tRNA(Thr). Also edits incorrectly charged L-seryl-tRNA(Thr). This is Threonine--tRNA ligase from Aromatoleum aromaticum (strain DSM 19018 / LMG 30748 / EbN1) (Azoarcus sp. (strain EbN1)).